A 388-amino-acid chain; its full sequence is Pepsin A (388 aa).

An N-terminal signal peptide occupies residues 1-15; it reads MKWLLLLGLVALSEC. Residues 16 to 62 constitute a propeptide, activation peptide; it reads IIYKVPLVRKKSLRRNLSEHGLLKDFLKKHNRNPASKYFPQTEAPTL. The region spanning 76–385 is the Peptidase A1 domain; the sequence is YFGTIGIGTP…DRANNQVGLA (310 aa). D94 is an active-site residue. An intrachain disulfide couples C107 to C112. A Phosphoserine modification is found at S130. Cysteines 268 and 272 form a disulfide. Residue D277 is part of the active site. C311 and C344 are oxidised to a cystine.

Belongs to the peptidase A1 family.

The protein resides in the secreted. The catalysed reaction is Preferential cleavage: hydrophobic, preferably aromatic, residues in P1 and P1' positions. Cleaves 1-Phe-|-Val-2, 4-Gln-|-His-5, 13-Glu-|-Ala-14, 14-Ala-|-Leu-15, 15-Leu-|-Tyr-16, 16-Tyr-|-Leu-17, 23-Gly-|-Phe-24, 24-Phe-|-Phe-25 and 25-Phe-|-Tyr-26 bonds in the B chain of insulin.. Its function is as follows. Shows particularly broad specificity; although bonds involving phenylalanine and leucine are preferred, many others are also cleaved to some extent. The protein is Pepsin A (PGA) of Macaca mulatta (Rhesus macaque).